Reading from the N-terminus, the 46-residue chain is Aspartate aminotransferase 1 (46 aa).

The protein belongs to the class-I pyridoxal-phosphate-dependent aminotransferase family. In terms of assembly, homodimer. Requires pyridoxal 5'-phosphate as cofactor.

It carries out the reaction L-aspartate + 2-oxoglutarate = oxaloacetate + L-glutamate. In terms of biological role, important for the metabolism of amino acids and Krebs-cycle related organic acids. In plants, it is involved in nitrogen metabolism and in aspects of carbon and energy metabolism. This Pseudotsuga menziesii (Douglas-fir) protein is Aspartate aminotransferase 1.